The chain runs to 82 residues: Putative Fe(2+) transport protein A (82 aa).

Belongs to the FeoA family.

Functionally, might be involved in Fe(2+) ion uptake. The protein is Putative Fe(2+) transport protein A of Methanocaldococcus jannaschii (strain ATCC 43067 / DSM 2661 / JAL-1 / JCM 10045 / NBRC 100440) (Methanococcus jannaschii).